We begin with the raw amino-acid sequence, 265 residues long: Putative 2-aminoethylphosphonate transport system permease protein PhnV (265 aa).

6 helical membrane-spanning segments follow: residues 13-33 (GVVA…VILM), 69-89 (LTIG…AALA), 104-124 (VFYL…LVAF), 131-151 (MNGT…AFTF), 185-205 (LPLL…LSMG), and 233-253 (NIAD…LLMM). The ABC transmembrane type-1 domain maps to 65-253 (LLASLTIGFC…LVAITLLLMM (189 aa)).

Belongs to the binding-protein-dependent transport system permease family.

It localises to the cell inner membrane. Functionally, probably part of the PhnSTUV complex (TC 3.A.1.11.5) involved in 2-aminoethylphosphonate import. Probably responsible for the translocation of the substrate across the membrane. This chain is Putative 2-aminoethylphosphonate transport system permease protein PhnV (phnV), found in Salmonella choleraesuis (strain SC-B67).